The chain runs to 402 residues: Aminotransferase-like protein FGM3 (402 aa).

Residues 137-138, Asp218, and 282-283 each bind pyridoxal 5'-phosphate; these read TI and FG.

The protein belongs to the class-V pyridoxal-phosphate-dependent aminotransferase family. Csd subfamily.

Aminotransferase-like protein; part of the Fg3_54/C64 gene cluster that mediates the biosynthesis of the octapeptide fusaoctaxin A, a virulence factor that is required for cell-to-cell invasiveness of plant host. The 2 nonribosomal peptide synthetases NRPS9 and NRPS5 form an assembly line which likely utilizes GABA as a starter unit (loaded on the unique module M1 of NRPS9) and sequentially incorporates seven extender units composed of the residues L-Ala, L-allo-Ile, L-Ser, L-Val, L-Ser, L-Leu and L-Leu, respectively. During the process, each of the residues that are tethered on modules M3-M7 of NRPS5 containing an E domain can undergo an epimerization reaction to produce a D-configuration before the transpeptidation reaction occurs. The elongation of the peptidyl chain might be terminated by module M8-mediated L-Leu incorporation, followed by R domain-catalyzed 4 electron reduction to release the resulting octapeptide from the assembly line as an alcohol. Fusaoctaxin A is cleaved by the cluster specific ABC transporter FGM5 to the pentapeptide fusapentaxin A and the tripeptide fusatrixin A. The other enzymes from the cluster, FGM1, FGM2, FGM3 and FGM9 seem not to be involved in the biosynthesis of fusaoctaxin A and their functions have still to be determined. The chain is Aminotransferase-like protein FGM3 from Gibberella zeae (strain ATCC MYA-4620 / CBS 123657 / FGSC 9075 / NRRL 31084 / PH-1) (Wheat head blight fungus).